Consider the following 388-residue polypeptide: F-box protein At4g00893 (388 aa).

The interval 1 to 30 is disordered; it reads MLPSPSVHMASPPPSLNMASHPPSPATASR. Residues 42-88 form the F-box domain; it reads NPSFADLPSSLIEEIMLLLVLKDNIRASAACKSWYEAGVSVRVVDKH.

This is F-box protein At4g00893 from Arabidopsis thaliana (Mouse-ear cress).